The primary structure comprises 496 residues: MDSQQYNSNINLILNDEHHTETLNVDKKILIEKCEYFSRMLTQFSEINADTITIKVVDSNIAKNVIMSMFSDIDIYKNIGNCCDWKYLLLLYKCCDFFNISFDITKLNKLLVPNEGFELLLDIIDIIGYNYDMIELIINNLPKNYDLGKFPRELLETLYDHSTSYNIVSGSLDRTIKIWNVETQDFNSKIFTKLSKTLRYFPINKEQIFDNNIKCMDYSHKFNQIISGSNGGIKLWNIDNREVIKEFQCDYKINDICFSPDGKSCVCANKFLSIYDLDNGRRKVLNLTRIKSIGCIKTCVCWTSDNIIACGDSDGVIEFWNAETNLIIKWCQVSKSRISNISFSPDRSQIAVSNQTKIILYDSIFDKKILEIKNSYIINFAYSPTEDVLVLIDGYLIKLYNCRTGNLFRTFNLYDCSSQNTMYFSLQSKIHFSPTGNQIIFTCDTKNENLVGIWNWKLNDDIIYLKGHQKQITSLCIIPDSENSTNKRIMNMLKNQ.

The 71-residue stretch at 8–78 (SNINLILNDE…MFSDIDIYKN (71 aa)) folds into the BTB domain. 6 WD repeats span residues 149–189 (KFPR…FNSK), 208–248 (IFDN…KEFQ), 250–285 (DYKINDICFSPDGKSCVCANKFLSIYDLDNGRRKVL), 291–330 (KSIGCIKTCVCWTSDNIIACGDSDGVIEFWNAETNLIIKW), 333–371 (VSKSRISNISFSPDRSQIAVSNQTKIILYDSIFDKKILE), and 422–464 (MYFS…DIIY).

It belongs to the mimivirus BTB/WD family.

This chain is Putative BTB/POZ domain and WD-repeat protein R61, found in Acanthamoeba polyphaga (Amoeba).